Consider the following 407-residue polypeptide: Imidazolonepropionase (407 aa).

Fe(3+) is bound by residues His-74 and His-76. Zn(2+) is bound by residues His-74 and His-76. 3 residues coordinate 4-imidazolone-5-propanoate: Arg-83, Tyr-146, and His-179. Position 146 (Tyr-146) interacts with N-formimidoyl-L-glutamate. His-244 lines the Fe(3+) pocket. Position 244 (His-244) interacts with Zn(2+). Gln-247 lines the 4-imidazolone-5-propanoate pocket. Asp-319 lines the Fe(3+) pocket. Asp-319 provides a ligand contact to Zn(2+). N-formimidoyl-L-glutamate contacts are provided by Asn-321 and Gly-323. A 4-imidazolone-5-propanoate-binding site is contributed by Thr-324.

This sequence belongs to the metallo-dependent hydrolases superfamily. HutI family. It depends on Zn(2+) as a cofactor. Fe(3+) is required as a cofactor.

It localises to the cytoplasm. The catalysed reaction is 4-imidazolone-5-propanoate + H2O = N-formimidoyl-L-glutamate. It participates in amino-acid degradation; L-histidine degradation into L-glutamate; N-formimidoyl-L-glutamate from L-histidine: step 3/3. Its function is as follows. Catalyzes the hydrolytic cleavage of the carbon-nitrogen bond in imidazolone-5-propanoate to yield N-formimidoyl-L-glutamate. It is the third step in the universal histidine degradation pathway. The protein is Imidazolonepropionase of Salmonella agona (strain SL483).